The following is a 473-amino-acid chain: ATP synthase subunit beta (473 aa).

158–165 (GGAGVGKT) contacts ATP.

This sequence belongs to the ATPase alpha/beta chains family. In terms of assembly, F-type ATPases have 2 components, CF(1) - the catalytic core - and CF(0) - the membrane proton channel. CF(1) has five subunits: alpha(3), beta(3), gamma(1), delta(1), epsilon(1). CF(0) has three main subunits: a(1), b(2) and c(9-12). The alpha and beta chains form an alternating ring which encloses part of the gamma chain. CF(1) is attached to CF(0) by a central stalk formed by the gamma and epsilon chains, while a peripheral stalk is formed by the delta and b chains.

It is found in the cell membrane. The catalysed reaction is ATP + H2O + 4 H(+)(in) = ADP + phosphate + 5 H(+)(out). Its function is as follows. Produces ATP from ADP in the presence of a proton gradient across the membrane. The catalytic sites are hosted primarily by the beta subunits. This is ATP synthase subunit beta from Bacillus velezensis (strain DSM 23117 / BGSC 10A6 / LMG 26770 / FZB42) (Bacillus amyloliquefaciens subsp. plantarum).